The following is a 257-amino-acid chain: 3-methyl-2-oxobutanoate hydroxymethyltransferase (257 aa).

Residues aspartate 44 and aspartate 83 each contribute to the Mg(2+) site. Residues 44–45 (DS), aspartate 83, and lysine 113 contribute to the 3-methyl-2-oxobutanoate site. Glutamate 115 lines the Mg(2+) pocket. The active-site Proton acceptor is glutamate 182.

This sequence belongs to the PanB family. As to quaternary structure, homodecamer; pentamer of dimers. Mg(2+) serves as cofactor.

It localises to the cytoplasm. It catalyses the reaction 3-methyl-2-oxobutanoate + (6R)-5,10-methylene-5,6,7,8-tetrahydrofolate + H2O = 2-dehydropantoate + (6S)-5,6,7,8-tetrahydrofolate. It participates in cofactor biosynthesis; (R)-pantothenate biosynthesis; (R)-pantoate from 3-methyl-2-oxobutanoate: step 1/2. In terms of biological role, catalyzes the reversible reaction in which hydroxymethyl group from 5,10-methylenetetrahydrofolate is transferred onto alpha-ketoisovalerate to form ketopantoate. The chain is 3-methyl-2-oxobutanoate hydroxymethyltransferase from Rippkaea orientalis (strain PCC 8801 / RF-1) (Cyanothece sp. (strain PCC 8801)).